A 124-amino-acid chain; its full sequence is Small ribosomal subunit protein uS12 (124 aa).

Aspartate 89 bears the 3-methylthioaspartic acid mark.

The protein belongs to the universal ribosomal protein uS12 family. Part of the 30S ribosomal subunit. Contacts proteins S8 and S17. May interact with IF1 in the 30S initiation complex.

Functionally, with S4 and S5 plays an important role in translational accuracy. Its function is as follows. Interacts with and stabilizes bases of the 16S rRNA that are involved in tRNA selection in the A site and with the mRNA backbone. Located at the interface of the 30S and 50S subunits, it traverses the body of the 30S subunit contacting proteins on the other side and probably holding the rRNA structure together. The combined cluster of proteins S8, S12 and S17 appears to hold together the shoulder and platform of the 30S subunit. The sequence is that of Small ribosomal subunit protein uS12 from Prochlorococcus marinus (strain SARG / CCMP1375 / SS120).